Consider the following 1597-residue polypeptide: Protein STU1 (1597 aa).

4 disordered regions span residues 220 to 265, 519 to 958, 1005 to 1154, and 1307 to 1332; these read GNSS…PSSS, DKVN…RPIH, DAEA…ELNT, and SQRP…SSLV. Over residues 535–552 the composition is skewed to basic and acidic residues; the sequence is APRESLKEVMRRSRESSV. Positions 577–605 are enriched in low complexity; the sequence is SSGLVGRSLSGSNLTDRSNRLSSTSTSSR. Polar residues-rich tracts occupy residues 610–622 and 632–645; these read AVSD…QMTR and PSLT…SLTR. Composition is skewed to basic and acidic residues over residues 660–673 and 694–708; these read GSRE…DQNR and ESSR…DPSR. A compositionally biased stretch (polar residues) spans 709-726; that stretch reads ESSLAPSVHSSTAISRES. Residues 765-781 show a composition bias toward low complexity; it reads EETMNEVTTAEATATTA. 2 stretches are compositionally biased toward polar residues: residues 791 to 801 and 808 to 822; these read PRESTPPNSSP and PATQ…TGKS. The span at 832–846 shows a compositional bias: basic and acidic residues; it reads ELSRDLNGESKHLKE. Composition is skewed to polar residues over residues 918–933, 1013–1025, and 1036–1045; these read DSQS…QSEP, TEQT…SDTA, and NSEQGPSTEP. The segment covering 1081–1091 has biased composition (basic and acidic residues); the sequence is ASDEIETDHTK. Residues 1108-1119 are compositionally biased toward acidic residues; it reads EPMEICDSDNDA. The segment covering 1122–1139 has biased composition (polar residues); the sequence is NGTNPDTKCQDQQDSTTP. The stretch at 1537–1573 is one HEAT repeat; the sequence is PSYETQLLALITELISDPDPLVRRVTVGLVVRVLRVS.

Belongs to the CLASP family. Interacts with microtubules.

The protein resides in the cytoplasm. It is found in the cytoskeleton. The protein localises to the nucleus. Its subcellular location is the spindle. Its function is as follows. Microtubule binding protein that promotes the stabilization of dynamic microtubules. Required for mitotic spindle formation. The protein is Protein STU1 (STU1) of Yarrowia lipolytica (strain CLIB 122 / E 150) (Yeast).